Consider the following 268-residue polypeptide: Tryptophan synthase alpha chain (268 aa).

Active-site proton acceptor residues include glutamate 49 and aspartate 60.

The protein belongs to the TrpA family. As to quaternary structure, tetramer of two alpha and two beta chains.

The enzyme catalyses (1S,2R)-1-C-(indol-3-yl)glycerol 3-phosphate + L-serine = D-glyceraldehyde 3-phosphate + L-tryptophan + H2O. It functions in the pathway amino-acid biosynthesis; L-tryptophan biosynthesis; L-tryptophan from chorismate: step 5/5. Functionally, the alpha subunit is responsible for the aldol cleavage of indoleglycerol phosphate to indole and glyceraldehyde 3-phosphate. The chain is Tryptophan synthase alpha chain from Escherichia coli O6:K15:H31 (strain 536 / UPEC).